Consider the following 357-residue polypeptide: Putative F-box protein At5g50220 (357 aa).

One can recognise an F-box domain in the interval 27 to 73 (IAEDIGIPIDLMVEILKKLPAKSLIKFQCVSKQWSSIIGSSRDFIDS).

This Arabidopsis thaliana (Mouse-ear cress) protein is Putative F-box protein At5g50220.